A 199-amino-acid polypeptide reads, in one-letter code: NAD(P)H dehydrogenase (quinone) (199 aa).

A Flavodoxin-like domain is found at V4–V190. Residues S10–I15 and T78–Y80 each bind FMN. Y12 is an NAD(+) binding site. A substrate-binding site is contributed by W98. FMN is bound by residues S113 to G119 and H134.

The protein belongs to the WrbA family. FMN serves as cofactor.

It catalyses the reaction a quinone + NADH + H(+) = a quinol + NAD(+). It carries out the reaction a quinone + NADPH + H(+) = a quinol + NADP(+). In Paraburkholderia phymatum (strain DSM 17167 / CIP 108236 / LMG 21445 / STM815) (Burkholderia phymatum), this protein is NAD(P)H dehydrogenase (quinone).